The following is a 119-amino-acid chain: Ribonuclease P protein component (119 aa).

It belongs to the RnpA family. Consists of a catalytic RNA component (M1 or rnpB) and a protein subunit.

The catalysed reaction is Endonucleolytic cleavage of RNA, removing 5'-extranucleotides from tRNA precursor.. In terms of biological role, RNaseP catalyzes the removal of the 5'-leader sequence from pre-tRNA to produce the mature 5'-terminus. It can also cleave other RNA substrates such as 4.5S RNA. The protein component plays an auxiliary but essential role in vivo by binding to the 5'-leader sequence and broadening the substrate specificity of the ribozyme. In Citrobacter koseri (strain ATCC BAA-895 / CDC 4225-83 / SGSC4696), this protein is Ribonuclease P protein component.